A 765-amino-acid chain; its full sequence is Protein PAT1 homolog 1 (765 aa).

Disordered regions lie at residues 1–98 (MFRF…DERG), 119–147 (GVGS…LAGP), and 210–244 (LPNR…SPPV). The segment covering 7–30 (LDDDCTLEEEEGLVEEEDEIDQFN) has biased composition (acidic residues). Over residues 45-59 (EEHTRLAELDERVRD) the composition is skewed to basic and acidic residues. Basic and acidic residues predominate over residues 218–227 (SRDEGRDLSE). Phosphoserine is present on residues Ser-235 and Ser-236. Over residues 235 to 244 (SSPVIGSPPV) the composition is skewed to low complexity.

The protein belongs to the PAT1 family. Interacts with ribonucleoprotein complex components.

The protein resides in the cytoplasm. Its subcellular location is the P-body. The protein localises to the nucleus. It is found in the PML body. It localises to the nucleus speckle. Functionally, RNA-binding protein involved in deadenylation-dependent decapping of mRNAs, leading to the degradation of mRNAs. Acts as a scaffold protein that connects deadenylation and decapping machinery. Required for cytoplasmic mRNA processing body (P-body) assembly. The polypeptide is Protein PAT1 homolog 1 (patl1) (Danio rerio (Zebrafish)).